Consider the following 266-residue polypeptide: Glucosamine-6-phosphate deaminase (266 aa).

The active-site Proton acceptor; for enolization step is Asp-72. The active-site For ring-opening step is the Asp-141. Catalysis depends on His-143, which acts as the Proton acceptor; for ring-opening step. Catalysis depends on Glu-148, which acts as the For ring-opening step.

The protein belongs to the glucosamine/galactosamine-6-phosphate isomerase family. NagB subfamily. As to quaternary structure, homohexamer; trimer of disulfide-linked dimers.

The enzyme catalyses alpha-D-glucosamine 6-phosphate + H2O = beta-D-fructose 6-phosphate + NH4(+). It functions in the pathway amino-sugar metabolism; N-acetylneuraminate degradation; D-fructose 6-phosphate from N-acetylneuraminate: step 5/5. Allosterically activated by N-acetylglucosamine 6-phosphate (GlcNAc6P). Functionally, catalyzes the reversible isomerization-deamination of glucosamine 6-phosphate (GlcN6P) to form fructose 6-phosphate (Fru6P) and ammonium ion. The polypeptide is Glucosamine-6-phosphate deaminase (Escherichia coli O6:H1 (strain CFT073 / ATCC 700928 / UPEC)).